Reading from the N-terminus, the 118-residue chain is UPF0102 protein Nwi_0116 (118 aa).

This sequence belongs to the UPF0102 family.

The polypeptide is UPF0102 protein Nwi_0116 (Nitrobacter winogradskyi (strain ATCC 25391 / DSM 10237 / CIP 104748 / NCIMB 11846 / Nb-255)).